Here is a 468-residue protein sequence, read N- to C-terminus: Nuclear receptor ROR-alpha A (468 aa).

Residues 15 to 90 (IIPCKICGDK…VGMSRDAVKF (76 aa)) constitute a DNA-binding region (nuclear receptor). 2 NR C4-type zinc fingers span residues 18–38 (CKICGDKSSGIHYGVITCEGC) and 54–73 (CPRQKNCLIDRTSRNRCQHC). Disordered stretches follow at residues 101-129 (LYAEVQKHRLQQQQRDHQQQPGEAEPLTP) and 142-163 (HDDLSGYMNGHTPDGTKPDSGV). Residues 217–455 (ELEHLAQNIS…AHFPPLYKEL (239 aa)) enclose the NR LBD domain. Residues 444–455 (VRAHFPPLYKEL) form an AF-2 region.

It belongs to the nuclear hormone receptor family. NR1 subfamily. Expressed in the brain, in cerebellar-like structures, including Purkinje cells.

It is found in the nucleus. Nuclear receptor that binds DNA as a monomer to ROR response elements (RORE). Required for proper cerebellum development. The chain is Nuclear receptor ROR-alpha A (roraa) from Danio rerio (Zebrafish).